The following is a 385-amino-acid chain: ATP phosphoribosyltransferase regulatory subunit (385 aa).

This sequence belongs to the class-II aminoacyl-tRNA synthetase family. HisZ subfamily. As to quaternary structure, heteromultimer composed of HisG and HisZ subunits.

It is found in the cytoplasm. Its pathway is amino-acid biosynthesis; L-histidine biosynthesis; L-histidine from 5-phospho-alpha-D-ribose 1-diphosphate: step 1/9. Its function is as follows. Required for the first step of histidine biosynthesis. May allow the feedback regulation of ATP phosphoribosyltransferase activity by histidine. In Bordetella petrii (strain ATCC BAA-461 / DSM 12804 / CCUG 43448), this protein is ATP phosphoribosyltransferase regulatory subunit.